The primary structure comprises 334 residues: Ribosomal RNA small subunit methyltransferase C (334 aa).

It belongs to the methyltransferase superfamily. RsmC family. In terms of assembly, monomer.

It localises to the cytoplasm. The enzyme catalyses guanosine(1207) in 16S rRNA + S-adenosyl-L-methionine = N(2)-methylguanosine(1207) in 16S rRNA + S-adenosyl-L-homocysteine + H(+). Functionally, specifically methylates the guanine in position 1207 of 16S rRNA in the 30S particle. The chain is Ribosomal RNA small subunit methyltransferase C from Idiomarina loihiensis (strain ATCC BAA-735 / DSM 15497 / L2-TR).